The sequence spans 40 residues: Bomanin Short 6 (40 aa).

The signal sequence occupies residues 1-18; the sequence is MKLLSITFLFGLLALASA. Positions 19-23 are cleaved as a propeptide — removed by a dipeptidylpeptidase; that stretch reads NPLSP. The cysteines at positions 32 and 35 are disulfide-linked.

Belongs to the bomanin family.

It is found in the secreted. Its function is as follows. Secreted immune-induced peptide induced by Toll signaling. Has a role in resistance to bacterial and fungal infections. The strength of antimicrobial activity appears to correlate with the overall level of expression. This chain is Bomanin Short 6, found in Drosophila melanogaster (Fruit fly).